The primary structure comprises 739 residues: UPF0313 protein YgiQ (739 aa).

The region spanning 372 to 650 (AYEMIRFSVN…KALLRYHDPA (279 aa)) is the Radical SAM core domain. Positions 386, 390, and 393 each coordinate [4Fe-4S] cluster. A disordered region spans residues 685 to 739 (REARRQNRNTRPALTKHTPMATQRQTPATAKKASSTQSRPVNAGAKKRPKAAVGR). Over residues 704-724 (MATQRQTPATAKKASSTQSRP) the composition is skewed to polar residues. Over residues 729–739 (AKKRPKAAVGR) the composition is skewed to basic residues.

This sequence belongs to the UPF0313 family. [4Fe-4S] cluster is required as a cofactor.

The protein is UPF0313 protein YgiQ (ygiQ) of Escherichia coli (strain K12).